The following is a 165-amino-acid chain: Nucleotide-binding protein P9301_05061 (165 aa).

This sequence belongs to the YajQ family.

Its function is as follows. Nucleotide-binding protein. The sequence is that of Nucleotide-binding protein P9301_05061 from Prochlorococcus marinus (strain MIT 9301).